Reading from the N-terminus, the 284-residue chain is tRNA pseudouridine synthase A (284 aa).

The active-site Nucleophile is D62. Y123 provides a ligand contact to substrate.

It belongs to the tRNA pseudouridine synthase TruA family. As to quaternary structure, homodimer.

The catalysed reaction is uridine(38/39/40) in tRNA = pseudouridine(38/39/40) in tRNA. Its function is as follows. Formation of pseudouridine at positions 38, 39 and 40 in the anticodon stem and loop of transfer RNAs. The protein is tRNA pseudouridine synthase A of Streptomyces griseus subsp. griseus (strain JCM 4626 / CBS 651.72 / NBRC 13350 / KCC S-0626 / ISP 5235).